Consider the following 121-residue polypeptide: Flagellar protein FliT (121 aa).

The segment at 1-50 (MNNAPHLYFAWQQLVEKSQLMLRLATEEQWDELIASEMAYVNAVQEIAHL) is required for homodimerization. The fliD binding stretch occupies residues 60–98 (MQEQLRPMLHLILDNESKVKQLLQIRMDELAKLVGQSSV).

This sequence belongs to the FliT family. Homodimer. Interacts with FliD and FlhC.

The protein resides in the cytoplasm. Its subcellular location is the cytosol. Dual-function protein that regulates the transcription of class 2 flagellar operons and that also acts as an export chaperone for the filament-capping protein FliD. As a transcriptional regulator, acts as an anti-FlhDC factor; it directly binds FlhC, thus inhibiting the binding of the FlhC/FlhD complex to class 2 promoters, resulting in decreased expression of class 2 flagellar operons. As a chaperone, effects FliD transition to the membrane by preventing its premature polymerization, and by directing it to the export apparatus. The sequence is that of Flagellar protein FliT from Shigella flexneri serotype 5b (strain 8401).